The sequence spans 1412 residues: Ecdysone-induced protein 75B, isoform B (1412 aa).

Residues 1–14 (MEAVQAAAAATSSG) are compositionally biased toward low complexity. Disordered stretches follow at residues 1–96 (MEAV…PGGT), 110–204 (QRAT…QQHV), 258–298 (QYQQ…VPPP), and 321–448 (HFQQ…SIPD). The segment covering 15–25 (GSSGSVPGSGS) has biased composition (gly residues). Basic and acidic residues predominate over residues 32–57 (IKTEPIDFEMLHLEENERQQDIEREP). A compositionally biased stretch (low complexity) spans 58-68 (SSSNSNSNSNS). The span at 69-81 (LTPQRYTHVQVQT) shows a compositional bias: polar residues. A compositionally biased stretch (low complexity) spans 87–96 (PTGLTTPGGT). Residues 124–133 (YSQQQGTAAS) show a composition bias toward polar residues. Over residues 135-150 (SAPPETTALLTTTSGT) the composition is skewed to low complexity. Positions 151-164 (PQIIITRTLPSNQH) are enriched in polar residues. The segment covering 177–203 (HHYQQQQPQRQQSPPPLHHQQQQQQQH) has biased composition (low complexity). Over residues 266-284 (PLAPPPPPPPPPPPPPPPQ) the composition is skewed to pro residues. Composition is skewed to low complexity over residues 323 to 371 (QQQQ…SSHI), 378 to 403 (SSSSSSNMHHQQQQQQQQSSLGNSVM), and 417 to 447 (ASSSSSGNSSSSNTNNSSSSSNGEEPSSSIP). The segment at residues 455–531 (TVLCRVCGDK…VGMSRDAVRF (77 aa)) is a DNA-binding region (nuclear receptor). 2 NR C4-type zinc fingers span residues 458 to 478 (CRVCGDKASGFHYGVHSCEGC) and 495 to 514 (CTKNQQCSILRINRNRCQYC). The NR LBD domain maps to 565 to 813 (DQPRLLAAVL…QQMWSMEDGN (249 aa)). 6 disordered regions span residues 837 to 878 (KSPL…SALA), 984 to 1021 (LDSPTDSGIESGNEKNECKAVSSGGSSSCSSPRSSVDD), 1044 to 1064 (VSVSPVRSPQPSTSSHLKRQI), 1108 to 1174 (AEAD…SSHS), 1204 to 1317 (ENST…SNSA), and 1368 to 1401 (VTVTASNGGPPSAAASPAPSSSPPASVGSPNPGL). Composition is skewed to low complexity over residues 854-866 (GSPSSSQPQGVSL), 1005-1017 (SSGGSSSCSSPRS), 1044-1058 (VSVSPVRSPQPSTSS), 1110-1155 (ADAS…AQSQ), and 1163-1174 (SSPKASMASSHS). Polar residues-rich tracts occupy residues 1206 to 1219 (STAASSTTNGVGNR) and 1231 to 1253 (AVQNQQRWGSSSVITTTCQQRQQ). 3 stretches are compositionally biased toward low complexity: residues 1254–1290 (SVSPHSNGSSSSSSSSSSSSSSSSSTSSNCSSSSASS), 1299–1317 (STSNGTSAPASSSSGSNSA), and 1372–1400 (ASNGGPPSAAASPAPSSSPPASVGSPNPG).

It belongs to the nuclear hormone receptor family. NR1 subfamily.

The protein localises to the nucleus. Its function is as follows. Implicated in the regulation of ecdysone-triggered gene hierarchies. Probably plays a key role in mediating the regulation of the larval molt by 20-OH-ecdysone. In Drosophila melanogaster (Fruit fly), this protein is Ecdysone-induced protein 75B, isoform B (Eip75B).